A 75-amino-acid chain; its full sequence is DNA-directed RNA polymerase subunit Rpo6 (75 aa).

This sequence belongs to the archaeal Rpo6/eukaryotic RPB6 RNA polymerase subunit family. As to quaternary structure, part of the RNA polymerase complex.

It localises to the cytoplasm. It catalyses the reaction RNA(n) + a ribonucleoside 5'-triphosphate = RNA(n+1) + diphosphate. Functionally, DNA-dependent RNA polymerase (RNAP) catalyzes the transcription of DNA into RNA using the four ribonucleoside triphosphates as substrates. In Archaeoglobus fulgidus (strain ATCC 49558 / DSM 4304 / JCM 9628 / NBRC 100126 / VC-16), this protein is DNA-directed RNA polymerase subunit Rpo6.